A 430-amino-acid chain; its full sequence is Lipoyl synthase, chloroplastic (430 aa).

Positions 1–16 (MRSLATLHQSPASCSR) are enriched in polar residues. The N-terminal 40 residues, 1 to 40 (MRSLATLHQSPASCSRSAPVAPCPARRANSSRRVARQGPR), are a transit peptide targeting the chloroplast. Disordered regions lie at residues 1 to 55 (MRSL…SEDV) and 85 to 119 (HLRS…SLGA). Positions 91–119 (KSAAPVSPFAAPSPGSPSASSMLGPSLGA) are enriched in low complexity. Cys155, Cys160, Cys166, Cys183, Cys187, Cys190, and Ser397 together coordinate [4Fe-4S] cluster. The Radical SAM core domain maps to 166 to 386 (CWNGELATAT…KFGQEEIGFR (221 aa)).

The protein belongs to the radical SAM superfamily. Lipoyl synthase family. [4Fe-4S] cluster serves as cofactor.

Its subcellular location is the plastid. It localises to the chloroplast. The catalysed reaction is [[Fe-S] cluster scaffold protein carrying a second [4Fe-4S](2+) cluster] + N(6)-octanoyl-L-lysyl-[protein] + 2 oxidized [2Fe-2S]-[ferredoxin] + 2 S-adenosyl-L-methionine + 4 H(+) = [[Fe-S] cluster scaffold protein] + N(6)-[(R)-dihydrolipoyl]-L-lysyl-[protein] + 4 Fe(3+) + 2 hydrogen sulfide + 2 5'-deoxyadenosine + 2 L-methionine + 2 reduced [2Fe-2S]-[ferredoxin]. Its pathway is protein modification; protein lipoylation via endogenous pathway; protein N(6)-(lipoyl)lysine from octanoyl-[acyl-carrier-protein]: step 2/2. In terms of biological role, catalyzes the radical-mediated insertion of two sulfur atoms into the C-6 and C-8 positions of the octanoyl moiety bound to the lipoyl domains of lipoate-dependent enzymes, thereby converting the octanoylated domains into lipoylated derivatives. The chain is Lipoyl synthase, chloroplastic from Chlamydomonas reinhardtii (Chlamydomonas smithii).